The primary structure comprises 55 residues: ATP synthase F(0) complex subunit 8 (55 aa).

A helical membrane pass occupies residues 4 to 24 (LNPAPWFTILVFSWMIFLAII). Positions 32–41 (TSPNDSSPLS) are enriched in polar residues. The tract at residues 32-55 (TSPNDSSPLSTEKHKTESWDWPWQ) is disordered.

It belongs to the ATPase protein 8 family. As to quaternary structure, component of the ATP synthase complex composed at least of ATP5F1A/subunit alpha, ATP5F1B/subunit beta, ATP5MC1/subunit c (homooctomer), MT-ATP6/subunit a, MT-ATP8/subunit 8, ATP5ME/subunit e, ATP5MF/subunit f, ATP5MG/subunit g, ATP5MK/subunit k, ATP5MJ/subunit j, ATP5F1C/subunit gamma, ATP5F1D/subunit delta, ATP5F1E/subunit epsilon, ATP5PF/subunit F6, ATP5PB/subunit b, ATP5PD/subunit d, ATP5PO/subunit OSCP. ATP synthase complex consists of a soluble F(1) head domain (subunits alpha(3) and beta(3)) - the catalytic core - and a membrane F(0) domain - the membrane proton channel (subunits c, a, 8, e, f, g, k and j). These two domains are linked by a central stalk (subunits gamma, delta, and epsilon) rotating inside the F1 region and a stationary peripheral stalk (subunits F6, b, d, and OSCP).

It is found in the mitochondrion membrane. In terms of biological role, subunit 8, of the mitochondrial membrane ATP synthase complex (F(1)F(0) ATP synthase or Complex V) that produces ATP from ADP in the presence of a proton gradient across the membrane which is generated by electron transport complexes of the respiratory chain. ATP synthase complex consist of a soluble F(1) head domain - the catalytic core - and a membrane F(1) domain - the membrane proton channel. These two domains are linked by a central stalk rotating inside the F(1) region and a stationary peripheral stalk. During catalysis, ATP synthesis in the catalytic domain of F(1) is coupled via a rotary mechanism of the central stalk subunits to proton translocation. In vivo, can only synthesize ATP although its ATP hydrolase activity can be activated artificially in vitro. Part of the complex F(0) domain. The sequence is that of ATP synthase F(0) complex subunit 8 from Formosania lacustris (Oriental stream loach).